The primary structure comprises 276 residues: 2-dehydro-3-deoxyphosphooctonate aldolase (276 aa).

Belongs to the KdsA family.

The protein localises to the cytoplasm. It catalyses the reaction D-arabinose 5-phosphate + phosphoenolpyruvate + H2O = 3-deoxy-alpha-D-manno-2-octulosonate-8-phosphate + phosphate. Its pathway is carbohydrate biosynthesis; 3-deoxy-D-manno-octulosonate biosynthesis; 3-deoxy-D-manno-octulosonate from D-ribulose 5-phosphate: step 2/3. It functions in the pathway bacterial outer membrane biogenesis; lipopolysaccharide biosynthesis. The polypeptide is 2-dehydro-3-deoxyphosphooctonate aldolase (Chelativorans sp. (strain BNC1)).